The chain runs to 375 residues: Enoyl-[acyl-carrier-protein] reductase [NADH] 1, chloroplastic (375 aa).

Residues 1–67 (MGASAATGMQ…SSKRSGVAIR (67 aa)) constitute a chloroplast transit peptide. Residues G91, Y98, 155-156 (DA), 202-203 (SL), and L252 contribute to the NAD(+) site. Catalysis depends on proton acceptor residues Y254 and Y264. Residues K272 and 302–306 (LGSRA) contribute to the NAD(+) site.

Belongs to the short-chain dehydrogenases/reductases (SDR) family. FabI subfamily. As to quaternary structure, homotetramer.

It localises to the plastid. The protein resides in the chloroplast. It catalyses the reaction a 2,3-saturated acyl-[ACP] + NAD(+) = a (2E)-enoyl-[ACP] + NADH + H(+). The protein operates within lipid metabolism; fatty acid biosynthesis. Catalyzes the NAD-dependent reduction of a carbon-carbon double bond in an enoyl moiety that is covalently linked to an acyl carrier protein (ACP). Catalyzes the last reduction step in the de novo synthesis cycle of fatty acids. Involved in the elongation cycle of fatty acids which are used in lipid metabolism. Required for normal plant growth. This Oryza sativa subsp. japonica (Rice) protein is Enoyl-[acyl-carrier-protein] reductase [NADH] 1, chloroplastic.